A 340-amino-acid chain; its full sequence is Ketol-acid reductoisomerase (NADP(+)) (340 aa).

A KARI N-terminal Rossmann domain is found at 3-182; it reads VTMYYEEDVE…GCARVGIIET (180 aa). Residues 26–29, Arg-49, Ser-53, and 83–86 each bind NADP(+); these read YGSQ and DELQ. His-108 is an active-site residue. Residue Gly-134 participates in NADP(+) binding. Positions 183 to 328 constitute a KARI C-terminal knotted domain; the sequence is TFKEETEEDL…AELRKAMPFT (146 aa). Asp-191, Glu-195, Glu-227, and Glu-231 together coordinate Mg(2+). Ser-252 is a binding site for substrate.

The protein belongs to the ketol-acid reductoisomerase family. It depends on Mg(2+) as a cofactor.

It carries out the reaction (2R)-2,3-dihydroxy-3-methylbutanoate + NADP(+) = (2S)-2-acetolactate + NADPH + H(+). It catalyses the reaction (2R,3R)-2,3-dihydroxy-3-methylpentanoate + NADP(+) = (S)-2-ethyl-2-hydroxy-3-oxobutanoate + NADPH + H(+). It functions in the pathway amino-acid biosynthesis; L-isoleucine biosynthesis; L-isoleucine from 2-oxobutanoate: step 2/4. The protein operates within amino-acid biosynthesis; L-valine biosynthesis; L-valine from pyruvate: step 2/4. Functionally, involved in the biosynthesis of branched-chain amino acids (BCAA). Catalyzes an alkyl-migration followed by a ketol-acid reduction of (S)-2-acetolactate (S2AL) to yield (R)-2,3-dihydroxy-isovalerate. In the isomerase reaction, S2AL is rearranged via a Mg-dependent methyl migration to produce 3-hydroxy-3-methyl-2-ketobutyrate (HMKB). In the reductase reaction, this 2-ketoacid undergoes a metal-dependent reduction by NADPH to yield (R)-2,3-dihydroxy-isovalerate. The chain is Ketol-acid reductoisomerase (NADP(+)) from Lactococcus lactis subsp. cremoris (strain MG1363).